Consider the following 356-residue polypeptide: Heat-inducible transcription repressor HrcA (356 aa).

The protein belongs to the HrcA family.

In terms of biological role, negative regulator of class I heat shock genes (grpE-dnaK-dnaJ and groELS operons). Prevents heat-shock induction of these operons. The protein is Heat-inducible transcription repressor HrcA of Bartonella henselae (strain ATCC 49882 / DSM 28221 / CCUG 30454 / Houston 1) (Rochalimaea henselae).